Reading from the N-terminus, the 139-residue chain is Putative pre-16S rRNA nuclease (139 aa).

The protein belongs to the YqgF nuclease family.

The protein localises to the cytoplasm. In terms of biological role, could be a nuclease involved in processing of the 5'-end of pre-16S rRNA. This Haemophilus influenzae (strain PittEE) protein is Putative pre-16S rRNA nuclease.